The following is a 263-amino-acid chain: 3-deoxy-manno-octulosonate cytidylyltransferase 1 (263 aa).

The protein belongs to the KdsB family.

Its subcellular location is the cytoplasm. The catalysed reaction is 3-deoxy-alpha-D-manno-oct-2-ulosonate + CTP = CMP-3-deoxy-beta-D-manno-octulosonate + diphosphate. The protein operates within nucleotide-sugar biosynthesis; CMP-3-deoxy-D-manno-octulosonate biosynthesis; CMP-3-deoxy-D-manno-octulosonate from 3-deoxy-D-manno-octulosonate and CTP: step 1/1. It participates in bacterial outer membrane biogenesis; lipopolysaccharide biosynthesis. Functionally, activates KDO (a required 8-carbon sugar) for incorporation into bacterial lipopolysaccharide in Gram-negative bacteria. This chain is 3-deoxy-manno-octulosonate cytidylyltransferase 1, found in Burkholderia ambifaria (strain ATCC BAA-244 / DSM 16087 / CCUG 44356 / LMG 19182 / AMMD) (Burkholderia cepacia (strain AMMD)).